Reading from the N-terminus, the 215-residue chain is MEKNPPDDTGPVHVPLGHIVANEKWRGSQLAQEMQGKIKLIFEDGLTPDFYLSNRCCILYVTEADLVAGNGYRKRLVRVRNSNNLKGIVVVEKTRMSEQYFPALQKFTVLDLGMVLLPVASQMEASCLVIQLVQEQTKEPSKNPLLGKKRALLLSEPSLLRTVQQIPGVGKVKAPLLLQKFPSIQQLSNASIGELEQVVGQAVAQQIHAFFTQPR.

Positions 160-215 (LRTVQQIPGVGKVKAPLLLQKFPSIQQLSNASIGELEQVVGQAVAQQIHAFFTQPR) are ruvA domain 2-like.

Belongs to the multisubunit FA complex composed of FANCA, FANCB, FANCC, FANCE, FANCF, FANCG, FANCL/PHF9, FANCM and FAAP24. Interacts with FANCM.

The protein localises to the nucleus. Plays a role in DNA repair through recruitment of the FA core complex to damaged DNA. Regulates FANCD2 monoubiquitination upon DNA damage. Induces chromosomal instability as well as hypersensitivity to DNA cross-linking agents, when repressed. Targets FANCM/FAAP24 complex to the DNA, preferentially to single strand DNA. The protein is Fanconi anemia core complex-associated protein 24 of Homo sapiens (Human).